Here is a 276-residue protein sequence, read N- to C-terminus: Undecaprenyl-diphosphatase (276 aa).

Helical transmembrane passes span 12-34 (LGIV…IVVG), 43-63 (TATA…MWEF), 85-105 (FNLL…ADLI), 108-128 (WLFN…IMLW), 185-205 (TEFS…YSLF), 218-238 (IFAI…RALL), and 249-269 (FAWY…LHLI).

This sequence belongs to the UppP family.

It is found in the cell inner membrane. The catalysed reaction is di-trans,octa-cis-undecaprenyl diphosphate + H2O = di-trans,octa-cis-undecaprenyl phosphate + phosphate + H(+). Its function is as follows. Catalyzes the dephosphorylation of undecaprenyl diphosphate (UPP). Confers resistance to bacitracin. The sequence is that of Undecaprenyl-diphosphatase from Ectopseudomonas mendocina (strain ymp) (Pseudomonas mendocina).